A 301-amino-acid polypeptide reads, in one-letter code: Probable aspartoacylase (301 aa).

Residues His13 and Glu16 each contribute to the Zn(2+) site. Substrate is bound by residues Arg54 and 61–62; that span reads NR. His105 contacts Zn(2+). 2 residues coordinate substrate: Glu163 and Tyr273.

This sequence belongs to the AspA/AstE family. Aspartoacylase subfamily. Zn(2+) is required as a cofactor.

It catalyses the reaction an N-acyl-L-aspartate + H2O = a carboxylate + L-aspartate. This Prochlorococcus marinus (strain MIT 9215) protein is Probable aspartoacylase.